The primary structure comprises 318 residues: Polyprenal reductase (318 aa).

Residues 1–11 (MAPWAEAEHSA) are Cytoplasmic-facing. A helical transmembrane segment spans residues 12 to 34 (LNPLRAVWLTLTAAFLLTLLLQL). Residues 35 to 80 (LPPGLLPGCAIFQDLIRYGKTKCGEPSRPAACRAFDVPKRYFSHFY) are Lumenal-facing. A helical transmembrane segment spans residues 81-101 (IISVLWNGFLLWCLTQSLFLG). The Cytoplasmic portion of the chain corresponds to 102–117 (APFPSWLHGLLRILGA). Residues 118 to 138 (AQFQGGELALSAFLVLVFLWL) traverse the membrane as a helical segment. Residues 139-157 (HSLRRLFECLYVSVFSNVM) are Lumenal-facing. Residues 158–178 (IHVVQYCFGLVYYVLVGLTVL) form a helical membrane-spanning segment. Residues 179 to 194 (SQVPMDGRNAYITGKN) are Cytoplasmic-facing. Residues 195–215 (LLMQARWFHILGMMMFIWSSA) form a helical membrane-spanning segment. The Lumenal portion of the chain corresponds to 216 to 260 (HQYKCHVILGNLRKNKAGVVIHCNHRIPFGDWFEYVSSPNYLAEL). Residues 261-281 (MIYVSMAVTFGFHNLTWWLVV) traverse the membrane as a helical segment. Residues 282–318 (TNVFFNQALSAFLSHQFYKSKFVSYPKHRKAFLPFLF) lie on the Cytoplasmic side of the membrane.

The protein belongs to the steroid 5-alpha reductase family. Polyprenal reductase subfamily. Expressed in preadipocytes (at protein level). Overexpressed in hormone-refractory prostate cancers (HRPC). Almost no or little expression in normal adult organs.

Its subcellular location is the endoplasmic reticulum membrane. The enzyme catalyses a di-trans,poly-cis-dolichal + NADP(+) = a di-trans,poly-cis-polyprenal + NADPH + H(+). The catalysed reaction is a 3-oxo-5alpha-steroid + NADP(+) = a 3-oxo-Delta(4)-steroid + NADPH + H(+). It catalyses the reaction androst-4-ene-3,17-dione + NADPH + H(+) = 5alpha-androstan-3,17-dione + NADP(+). It carries out the reaction 17beta-hydroxy-5alpha-androstan-3-one + NADP(+) = testosterone + NADPH + H(+). It participates in protein modification; protein glycosylation. Its function is as follows. Plays a key role in early steps of protein N-linked glycosylation by being involved in the conversion of polyprenol into dolichol. Acts as a polyprenal reductase that mediates the reduction of polyprenal into dolichal in a NADP-dependent mechanism. Dolichols are required for the synthesis of dolichol-linked monosaccharides and the oligosaccharide precursor used for N-glycosylation. Also able to convert testosterone (T) into 5-alpha-dihydrotestosterone (DHT). The chain is Polyprenal reductase from Homo sapiens (Human).